We begin with the raw amino-acid sequence, 372 residues long: Cytochrome b (372 aa).

Helical transmembrane passes span Phe-25–Ile-45, Trp-69–Ile-90, Trp-105–Leu-125, and Phe-170–Ile-190. 2 residues coordinate heme b: His-75 and His-89. Heme b-binding residues include His-174 and His-188. His-193 is a binding site for a ubiquinone. The next 4 helical transmembrane spans lie at Tyr-218 to Ser-238, Leu-280 to His-300, Leu-312 to Thr-332, and Phe-339 to Pro-358.

This sequence belongs to the cytochrome b family. The cytochrome bc1 complex contains 3 respiratory subunits (MT-CYB, CYC1 and UQCRFS1), 2 core proteins (UQCRC1 and UQCRC2) and probably 6 low-molecular weight proteins. Heme b is required as a cofactor.

The protein resides in the mitochondrion inner membrane. In terms of biological role, component of the ubiquinol-cytochrome c reductase complex (complex III or cytochrome b-c1 complex) that is part of the mitochondrial respiratory chain. The b-c1 complex mediates electron transfer from ubiquinol to cytochrome c. Contributes to the generation of a proton gradient across the mitochondrial membrane that is then used for ATP synthesis. The protein is Cytochrome b (MT-CYB) of Walterinnesia aegyptia (Desert black snake).